Reading from the N-terminus, the 274-residue chain is Large ribosomal subunit protein uL2 (274 aa).

Residues 224 to 259 (AMNPVDHPHGGGEGRTSGGRHPVTPWGIPTKGYKTR) are disordered.

It belongs to the universal ribosomal protein uL2 family. In terms of assembly, part of the 50S ribosomal subunit. Forms a bridge to the 30S subunit in the 70S ribosome.

One of the primary rRNA binding proteins. Required for association of the 30S and 50S subunits to form the 70S ribosome, for tRNA binding and peptide bond formation. It has been suggested to have peptidyltransferase activity; this is somewhat controversial. Makes several contacts with the 16S rRNA in the 70S ribosome. The protein is Large ribosomal subunit protein uL2 of Geobacter sp. (strain M21).